We begin with the raw amino-acid sequence, 131 residues long: D-ribose pyranase (131 aa).

His20 (proton donor) is an active-site residue. Substrate is bound by residues Asp28, His98, and 120-122 (YAN).

This sequence belongs to the RbsD / FucU family. RbsD subfamily. As to quaternary structure, homodecamer.

The protein resides in the cytoplasm. It catalyses the reaction beta-D-ribopyranose = beta-D-ribofuranose. It participates in carbohydrate metabolism; D-ribose degradation; D-ribose 5-phosphate from beta-D-ribopyranose: step 1/2. Functionally, catalyzes the interconversion of beta-pyran and beta-furan forms of D-ribose. The protein is D-ribose pyranase of Bacillus cytotoxicus (strain DSM 22905 / CIP 110041 / 391-98 / NVH 391-98).